Here is a 256-residue protein sequence, read N- to C-terminus: Triosephosphate isomerase (256 aa).

10-12 contacts substrate; sequence NWK. The active-site Electrophile is His99. Glu171 functions as the Proton acceptor in the catalytic mechanism. Residues Gly177, Ser216, and 237 to 238 contribute to the substrate site; that span reads GG.

The protein belongs to the triosephosphate isomerase family. In terms of assembly, homodimer.

It is found in the cytoplasm. The enzyme catalyses D-glyceraldehyde 3-phosphate = dihydroxyacetone phosphate. The protein operates within carbohydrate biosynthesis; gluconeogenesis. It participates in carbohydrate degradation; glycolysis; D-glyceraldehyde 3-phosphate from glycerone phosphate: step 1/1. Functionally, involved in the gluconeogenesis. Catalyzes stereospecifically the conversion of dihydroxyacetone phosphate (DHAP) to D-glyceraldehyde-3-phosphate (G3P). This Colwellia psychrerythraea (strain 34H / ATCC BAA-681) (Vibrio psychroerythus) protein is Triosephosphate isomerase.